The following is a 244-amino-acid chain: Haloacid dehalogenase-like hydrolase domain-containing protein 3 (244 aa).

The protein belongs to the HAD-like hydrolase superfamily.

This is Haloacid dehalogenase-like hydrolase domain-containing protein 3 (hdhd3) from Xenopus laevis (African clawed frog).